A 394-amino-acid polypeptide reads, in one-letter code: Phosphopentomutase (394 aa).

Residues Asp-14, Asp-287, His-292, Asp-328, His-329, and His-340 each coordinate Mn(2+).

Belongs to the phosphopentomutase family. Mn(2+) serves as cofactor.

The protein localises to the cytoplasm. The enzyme catalyses 2-deoxy-alpha-D-ribose 1-phosphate = 2-deoxy-D-ribose 5-phosphate. It catalyses the reaction alpha-D-ribose 1-phosphate = D-ribose 5-phosphate. Its pathway is carbohydrate degradation; 2-deoxy-D-ribose 1-phosphate degradation; D-glyceraldehyde 3-phosphate and acetaldehyde from 2-deoxy-alpha-D-ribose 1-phosphate: step 1/2. Functionally, isomerase that catalyzes the conversion of deoxy-ribose 1-phosphate (dRib-1-P) and ribose 1-phosphate (Rib-1-P) to deoxy-ribose 5-phosphate (dRib-5-P) and ribose 5-phosphate (Rib-5-P), respectively. This chain is Phosphopentomutase, found in Listeria innocua serovar 6a (strain ATCC BAA-680 / CLIP 11262).